Here is a 328-residue protein sequence, read N- to C-terminus: tRNA uridine(34) hydroxylase (328 aa).

The 95-residue stretch at 130–224 (LDEDTVVLDT…YGKDPEVQGE (95 aa)) folds into the Rhodanese domain. The active-site Cysteine persulfide intermediate is the cysteine 184.

The protein belongs to the TrhO family.

It carries out the reaction uridine(34) in tRNA + AH2 + O2 = 5-hydroxyuridine(34) in tRNA + A + H2O. Functionally, catalyzes oxygen-dependent 5-hydroxyuridine (ho5U) modification at position 34 in tRNAs. In Streptococcus sanguinis (strain SK36), this protein is tRNA uridine(34) hydroxylase.